Reading from the N-terminus, the 477-residue chain is Cyclin-A1-2 (477 aa).

Belongs to the cyclin family. Cyclin AB subfamily.

This Oryza sativa subsp. japonica (Rice) protein is Cyclin-A1-2 (CYCA1-2).